The chain runs to 526 residues: MASGPHSTATAAAAASSAAPSAGGSSSGTTTTTTTTTGGILIGDRLYSEVSLTIDHSLIPEERLSPTPSMQDGLDLPSETDLRILGCELIQAAGILLRLPQVAMATGQVLFHRFFYSKSFVKHSFEIVAMACINLASKIEEAPRRIRDVINVFHHLRQLRGKRTPSPLILDQNYINTKNQVIKAERRVLKELGFCVHVKHPHKIIVMYLQVLECERNQTLVQTAWNYMNDSLRTNVFVRFQPETIACACIYLAARALQIPLPTRPHWFLLFGTTEEEIQEICIETLRLYTRKKPNYELLEKEVEKRKVALQEAKLKAKGLNPDGTPALSTLGGFSPASKPSSPREVKAEEKSPISINVKTVKKEPEDRQQASKSPYNGVRKDSKRSRNSRSASRSRSRTRSRSRSHTPRRHYNNRRSRSGTYSSRSRSRSRSHSESPRRHHNHGSPHLKAKHTRDDLKSSNRHGHKRKKSRSRSQSKSRDHSDAAKKHRHERGHHRDRRERSRSFERSHKSKHHGGSRSGHGRHRR.

Positions 1-36 are disordered; the sequence is MASGPHSTATAAAAASSAAPSAGGSSSGTTTTTTTT. 2 cyclin-like regions span residues 88 to 190 and 203 to 287; these read ELIQ…RVLK and KIIV…ETLR. The interval 318–526 is disordered; the sequence is KGLNPDGTPA…SRSGHGRHRR (209 aa). At Thr-325 the chain carries Phosphothreonine. Phosphoserine occurs at positions 335 and 338. Glycyl lysine isopeptide (Lys-Gly) (interchain with G-Cter in SUMO2) cross-links involve residues Lys-339 and Lys-347. Positions 342 to 352 are enriched in basic and acidic residues; it reads SPREVKAEEKS. Phosphoserine occurs at positions 352 and 355. A compositionally biased stretch (basic and acidic residues) spans 361–370; it reads VKKEPEDRQQ. Residue Lys-362 forms a Glycyl lysine isopeptide (Lys-Gly) (interchain with G-Cter in SUMO2) linkage. The residue at position 374 (Ser-374) is a Phosphoserine. Basic residues-rich tracts occupy residues 382–418, 438–452, 460–476, and 486–498; these read DSKR…RRSR, RRHH…KAKH, SNRH…RSQS, and KKHR…HRDR. Residues 390-432 form an RS region; sequence RSASRSRSRTRSRSRSHTPRRHYNNRRSRSGTYSSRSRSRSRS. Residue Ser-445 is modified to Phosphoserine. Over residues 499-508 the composition is skewed to basic and acidic residues; sequence RERSRSFERS. Residues 509–526 show a composition bias toward basic residues; it reads HKSKHHGGSRSGHGRHRR.

It belongs to the cyclin family. Cyclin L subfamily. In terms of assembly, (Microbial infection) Interacts with human herpes virus 1 (HHV-1) transcriptional regulator ICP22. Interacts with POLR2A via its hyperphosphorylated C-terminal domain (CTD). Interacts with CDK11A, CDK12 and CDK13. Isoforms 1 and 2, but not isoform 3, interact with CDK11B. May form a ternary complex with CDK11B and casein kinase II (CKII). Interacts with pre-mRNA-splicing factors, including at least SRSF1, SRSF2 and SRSF7/SLU7. In terms of tissue distribution, widely expressed. Overexpression in primary tumors of head and neck squamous cell carcinomas (HNSCC).

It localises to the nucleus speckle. The protein resides in the nucleus. The protein localises to the nucleoplasm. Its function is as follows. Involved in pre-mRNA splicing. Functions in association with cyclin-dependent kinases (CDKs). Inhibited by the CDK-specific inhibitor CDKN1A/p21. May play a role in the regulation of RNA polymerase II (pol II). May be a candidate proto-oncogene in head and neck squamous cell carcinomas (HNSCC). This is Cyclin-L1 (CCNL1) from Homo sapiens (Human).